A 316-amino-acid polypeptide reads, in one-letter code: Methionyl-tRNA formyltransferase (316 aa).

112 to 115 (SLLP) contributes to the (6S)-5,6,7,8-tetrahydrofolate binding site.

This sequence belongs to the Fmt family.

It carries out the reaction L-methionyl-tRNA(fMet) + (6R)-10-formyltetrahydrofolate = N-formyl-L-methionyl-tRNA(fMet) + (6S)-5,6,7,8-tetrahydrofolate + H(+). Functionally, attaches a formyl group to the free amino group of methionyl-tRNA(fMet). The formyl group appears to play a dual role in the initiator identity of N-formylmethionyl-tRNA by promoting its recognition by IF2 and preventing the misappropriation of this tRNA by the elongation apparatus. This chain is Methionyl-tRNA formyltransferase, found in Psychromonas ingrahamii (strain DSM 17664 / CCUG 51855 / 37).